We begin with the raw amino-acid sequence, 81 residues long: Insect-toxin Cn10 (81 aa).

Residues 1–13 form the signal peptide; the sequence is ITACLVLIGTVCA. Residues 14-79 enclose the LCN-type CS-alpha/beta domain; that stretch reads KEGYLVNKST…TYPIPGKTCR (66 aa). Cystine bridges form between Cys25–Cys78, Cys29–Cys54, Cys38–Cys59, and Cys42–Cys61. Residue Lys81 is a propeptide, removed by a carboxypeptidase.

This sequence belongs to the long (4 C-C) scorpion toxin superfamily. Sodium channel inhibitor family. Beta subfamily. As to expression, expressed by the venom gland.

Its subcellular location is the secreted. Its function is as follows. Beta toxins bind voltage-independently at site-4 of sodium channels (Nav) and shift the voltage of activation toward more negative potentials thereby affecting sodium channel activation and promoting spontaneous and repetitive firing. Is toxic on insects and crustaceans, but not on mammals. The protein is Insect-toxin Cn10 of Centruroides noxius (Mexican scorpion).